Here is a 267-residue protein sequence, read N- to C-terminus: MYKFAVFGNPINHSLSPNIQNQFAKQTGFEISYDKILAPVDDFVSSVQAFINQGANGFNITVPFKLDAFKFANELTLNAKIAGSVNTIKIEADKIIGENTDGIGLIKDLTHNIGIKLKNKVILILGAGGATQGILFPILKQKPNQVIISNRTHSKAIRLAKNFSKFGNTCSFSLNKIKYKSVDIIINATSASFDGRIPNIAFSIANNAVCYDLMYGYQTPFMSWAKTNHAKMISDGLGMLVEQAAIAFEFWTGAKPDTKKVLSNLRR.

Shikimate is bound by residues 14 to 16 and Thr-61; that span reads SLS. Lys-65 serves as the catalytic Proton acceptor. 2 residues coordinate shikimate: Asn-86 and Asp-101. NADP(+) contacts are provided by residues 126-130, 150-155, and Leu-213; these read GAGGA and NRTHSK. Residue Tyr-215 participates in shikimate binding. Gly-236 serves as a coordination point for NADP(+).

Belongs to the shikimate dehydrogenase family. Homodimer.

The enzyme catalyses shikimate + NADP(+) = 3-dehydroshikimate + NADPH + H(+). The protein operates within metabolic intermediate biosynthesis; chorismate biosynthesis; chorismate from D-erythrose 4-phosphate and phosphoenolpyruvate: step 4/7. Functionally, involved in the biosynthesis of the chorismate, which leads to the biosynthesis of aromatic amino acids. Catalyzes the reversible NADPH linked reduction of 3-dehydroshikimate (DHSA) to yield shikimate (SA). This is Shikimate dehydrogenase (NADP(+)) from Vesicomyosocius okutanii subsp. Calyptogena okutanii (strain HA).